Reading from the N-terminus, the 359-residue chain is Phospho-N-acetylmuramoyl-pentapeptide-transferase (359 aa).

The next 10 helical transmembrane spans lie at 3-23, 53-73, 84-104, 117-137, 156-176, 187-207, 231-251, 255-275, 283-303, and 330-350; these read QILF…PVLI, GGVA…LIGI, GLLV…DDFI, TAKL…ALQF, IATV…LVSA, LDGL…IITF, LALI…WNAA, IFMG…LSIT, VVIG…VAVF, and VIIR…ALFY.

This sequence belongs to the glycosyltransferase 4 family. MraY subfamily. Requires Mg(2+) as cofactor.

The protein localises to the cell membrane. The catalysed reaction is UDP-N-acetyl-alpha-D-muramoyl-L-alanyl-gamma-D-glutamyl-meso-2,6-diaminopimeloyl-D-alanyl-D-alanine + di-trans,octa-cis-undecaprenyl phosphate = di-trans,octa-cis-undecaprenyl diphospho-N-acetyl-alpha-D-muramoyl-L-alanyl-D-glutamyl-meso-2,6-diaminopimeloyl-D-alanyl-D-alanine + UMP. It functions in the pathway cell wall biogenesis; peptidoglycan biosynthesis. Catalyzes the initial step of the lipid cycle reactions in the biosynthesis of the cell wall peptidoglycan: transfers peptidoglycan precursor phospho-MurNAc-pentapeptide from UDP-MurNAc-pentapeptide onto the lipid carrier undecaprenyl phosphate, yielding undecaprenyl-pyrophosphoryl-MurNAc-pentapeptide, known as lipid I. The protein is Phospho-N-acetylmuramoyl-pentapeptide-transferase of Rhodococcus opacus (strain B4).